A 617-amino-acid polypeptide reads, in one-letter code: Mitochondrial Rho GTPase 2 (617 aa).

Topologically, residues 1–590 (MKRDVRILLL…LNGSDMSSTS (590 aa)) are cytoplasmic. The Miro 1 domain maps to 2–168 (KRDVRILLLG…FYYAQKAVLH (167 aa)). Positions 16, 17, 18, and 19 each coordinate GTP. Thr18 is a binding site for Mg(2+). Asp57 contacts Mg(2+). 6 residues coordinate GTP: Ser59, Asn118, Lys119, Asp121, Ala149, and Lys150. EF-hand domains are found at residues 184–219 (QCVRALSRIFSISDQDNDHILSDAELNCFQKLCFGN) and 304–339 (LGHQFLLKLFEKYDEDKDSALSPAELKNLFSVLPYM). Ca(2+) contacts are provided by Asp197, Asp199, Asp201, Glu208, Asp317, Asp319, Asp321, and Glu328. A Miro 2 domain is found at 416 to 578 (RTVFLCKVIG…YSKLTWAAMY (163 aa)). Positions 428, 430, 431, and 432 each coordinate GTP. Thr432 and Glu474 together coordinate Mg(2+). Residues Lys528 and Asp530 each contribute to the GTP site. A helical; Anchor for type IV membrane protein membrane pass occupies residues 591 to 613 (FWLRVTLGATIAAMLGFALYRAF). Topologically, residues 614-617 (SRHK) are mitochondrial intermembrane.

This sequence belongs to the mitochondrial Rho GTPase family. As to quaternary structure, homodimer.

The protein resides in the mitochondrion outer membrane. The enzyme catalyses GTP + H2O = GDP + phosphate + H(+). It carries out the reaction ATP + H2O = ADP + phosphate + H(+). The catalysed reaction is UTP + H2O = UDP + phosphate + H(+). In terms of biological role, atypical mitochondrial nucleoside-triphosphatase (NTPase) involved in mitochondrial trafficking. Probably involved in control of anterograde transport of mitochondria and their subcellular distribution. Can hydrolyze GTP, ATP and UTP. The sequence is that of Mitochondrial Rho GTPase 2 (rhot2) from Danio rerio (Zebrafish).